An 88-amino-acid chain; its full sequence is Putative cancer susceptibility gene HEPN1 protein (88 aa).

In terms of tissue distribution, expressed in liver. Expression is either down-regulated or lost in hepatocellular carcinomas (HCC).

The protein resides in the cytoplasm. In Homo sapiens (Human), this protein is Putative cancer susceptibility gene HEPN1 protein (HEPN1).